We begin with the raw amino-acid sequence, 360 residues long: Photosystem II protein D1 1 (360 aa).

A run of 3 helical transmembrane segments spans residues 29 to 46 (YVGW…TAAI), 118 to 133 (HFLI…QWEL), and 142 to 156 (WIPV…AATA). Position 118 (His-118) interacts with chlorophyll a. A pheophytin a-binding site is contributed by Tyr-126. Residues Asp-170 and Glu-189 each coordinate [CaMn4O5] cluster. Residues 197 to 218 (FHMIGVAGVFGGALFSAMHGSL) form a helical membrane-spanning segment. Chlorophyll a is bound at residue His-198. Residues His-215 and 264–265 (SF) contribute to the a quinone site. Residue His-215 participates in Fe cation binding. His-272 contributes to the Fe cation binding site. The chain crosses the membrane as a helical span at residues 274–288 (FLAAWPVIGIWFAAL). [CaMn4O5] cluster is bound by residues His-332, Glu-333, Asp-342, and Ala-344. A propeptide spanning residues 345 to 360 (SGEVQPIALAAPAIAS) is cleaved from the precursor.

The protein belongs to the reaction center PufL/M/PsbA/D family. In terms of assembly, PSII is composed of 1 copy each of membrane proteins PsbA, PsbB, PsbC, PsbD, PsbE, PsbF, PsbH, PsbI, PsbJ, PsbK, PsbL, PsbM, PsbT, PsbX, PsbY, PsbZ, Psb30/Ycf12, peripheral proteins PsbO, CyanoQ (PsbQ), PsbU, PsbV and a large number of cofactors. It forms dimeric complexes. Requires The D1/D2 heterodimer binds P680, chlorophylls that are the primary electron donor of PSII, and subsequent electron acceptors. It shares a non-heme iron and each subunit binds pheophytin, quinone, additional chlorophylls, carotenoids and lipids. D1 provides most of the ligands for the Mn4-Ca-O5 cluster of the oxygen-evolving complex (OEC). There is also a Cl(-1) ion associated with D1 and D2, which is required for oxygen evolution. The PSII complex binds additional chlorophylls, carotenoids and specific lipids. as cofactor. In terms of processing, tyr-161 forms a radical intermediate that is referred to as redox-active TyrZ, YZ or Y-Z. C-terminally processed by CtpA; processing is essential to allow assembly of the oxygen-evolving complex and thus photosynthetic growth.

It is found in the cellular thylakoid membrane. The enzyme catalyses 2 a plastoquinone + 4 hnu + 2 H2O = 2 a plastoquinol + O2. Its function is as follows. Photosystem II (PSII) is a light-driven water:plastoquinone oxidoreductase that uses light energy to abstract electrons from H(2)O, generating O(2) and a proton gradient subsequently used for ATP formation. It consists of a core antenna complex that captures photons, and an electron transfer chain that converts photonic excitation into a charge separation. The D1/D2 (PsbA/PsbD) reaction center heterodimer binds P680, the primary electron donor of PSII as well as several subsequent electron acceptors. The chain is Photosystem II protein D1 1 from Trichormus variabilis (strain ATCC 29413 / PCC 7937) (Anabaena variabilis).